Reading from the N-terminus, the 247-residue chain is Ferredoxin:CoB-CoM heterodisulfide reductase subunit C (247 aa).

The region spanning 32 to 62 (TPESLGLDRCIQCGACTASCPAARFTDYSPR) is the 4Fe-4S ferredoxin-type domain. Positions 41, 44, 47, 51, 84, 87, 90, and 94 each coordinate [4Fe-4S] cluster. The segment covering 216 to 240 (RTGTSCTEKKKNSGDLGFESDREYT) has biased composition (basic and acidic residues). Residues 216–247 (RTGTSCTEKKKNSGDLGFESDREYTGQEALTV) form a disordered region.

The protein belongs to the HdrC family. In terms of assembly, the ferredoxin:CoB-CoM heterodisulfide reductase is composed of three subunits; HdrA1, HdrB1 and HdrC1. [4Fe-4S] cluster serves as cofactor.

It localises to the cytoplasm. The enzyme catalyses coenzyme B + coenzyme M + 2 oxidized [2Fe-2S]-[ferredoxin] = coenzyme M-coenzyme B heterodisulfide + 2 reduced [2Fe-2S]-[ferredoxin] + 2 H(+). It participates in cofactor metabolism; coenzyme M-coenzyme B heterodisulfide reduction; coenzyme B and coenzyme M from coenzyme M-coenzyme B heterodisulfide: step 1/1. In terms of biological role, part of a complex that catalyzes the reversible reduction of CoM-S-S-CoB to the thiol-coenzymes H-S-CoM (coenzyme M) and H-S-CoB (coenzyme B). Probably involved in methylotrophic methanogenesis but not in aceticlastic methanogenesis. The polypeptide is Ferredoxin:CoB-CoM heterodisulfide reductase subunit C (Methanosarcina acetivorans (strain ATCC 35395 / DSM 2834 / JCM 12185 / C2A)).